A 246-amino-acid chain; its full sequence is Ribonuclease PH (246 aa).

Residues arginine 91 and 129 to 131 (GTR) each bind phosphate.

It belongs to the RNase PH family. In terms of assembly, homohexameric ring arranged as a trimer of dimers.

It catalyses the reaction tRNA(n+1) + phosphate = tRNA(n) + a ribonucleoside 5'-diphosphate. Functionally, phosphorolytic 3'-5' exoribonuclease that plays an important role in tRNA 3'-end maturation. Removes nucleotide residues following the 3'-CCA terminus of tRNAs; can also add nucleotides to the ends of RNA molecules by using nucleoside diphosphates as substrates, but this may not be physiologically important. Probably plays a role in initiation of 16S rRNA degradation (leading to ribosome degradation) during starvation. This Paraburkholderia phymatum (strain DSM 17167 / CIP 108236 / LMG 21445 / STM815) (Burkholderia phymatum) protein is Ribonuclease PH.